We begin with the raw amino-acid sequence, 233 residues long: Archaetidylserine synthase (233 aa).

8 helical membrane-spanning segments follow: residues 7–27 (ITSFIALPDLLSMLNASSGYL), 29–49 (ILLSIDGSLNAACILMLLAVL), 75–95 (SLSDVISFGVAPAILIYSAAV), 102–122 (ILVGPLIVLCGILRLSRFNVL), 126–146 (GKNFTGLPIPVAAVTISSFYL), 147–167 (TGFYSELSAAFIMIAVSVLMI), 180–200 (ASTALILIIATIISVAAVEIL), and 206–226 (VAGPVAIILFIATLTYIAVPI).

It belongs to the CDP-alcohol phosphatidyltransferase class-I family.

The protein resides in the membrane. The catalysed reaction is CDP-2,3-bis-O-(geranylgeranyl)-sn-glycerol + L-serine = archaetidylserine + CMP + H(+). The enzyme catalyses CDP-2,3-bis-O-(phytanyl)-sn-glycerol + L-serine = 2,3-bis-O-phytanyl-sn-glycero-3-phospho-L-serine + CMP + H(+). It participates in membrane lipid metabolism; glycerophospholipid metabolism. Activated by Mn(2+) ions. Its function is as follows. Involved in the lipid biosynthesis. Catalyzes the formation of unsaturated archaetidylserine from CDP-unsaturated archaeol and L-serine. Activity with ester-linked substrate analogs containing straight aliphatic chains (typical bacterial substrates) is two to three times higher than that with the corresponding ether-type substrate (typical archaeal substrates). Both enantiomers of CDP-unsaturated archaeols with ether-linked geranylgeranyl chains and CDP-saturated archaeol with ether-linked phytanyl chains are similarly active. The enzyme also accepts D-serine, although activity is only about third of that with L-serine. The chain is Archaetidylserine synthase from Methanothermobacter thermautotrophicus (strain ATCC 29096 / DSM 1053 / JCM 10044 / NBRC 100330 / Delta H) (Methanobacterium thermoautotrophicum).